Here is a 1340-residue protein sequence, read N- to C-terminus: DNA-directed RNA polymerase subunit beta (1340 aa).

The protein belongs to the RNA polymerase beta chain family. In terms of assembly, the RNAP catalytic core consists of 2 alpha, 1 beta, 1 beta' and 1 omega subunit. When a sigma factor is associated with the core the holoenzyme is formed, which can initiate transcription.

The catalysed reaction is RNA(n) + a ribonucleoside 5'-triphosphate = RNA(n+1) + diphosphate. DNA-dependent RNA polymerase catalyzes the transcription of DNA into RNA using the four ribonucleoside triphosphates as substrates. The protein is DNA-directed RNA polymerase subunit beta of Baumannia cicadellinicola subsp. Homalodisca coagulata.